Here is a 513-residue protein sequence, read N- to C-terminus: Probable WRKY transcription factor 3 (513 aa).

Over residues methionine 1–lysine 11 the composition is skewed to basic and acidic residues. 3 disordered regions span residues methionine 1–proline 26, asparagine 175–proline 281, and isoleucine 297–serine 394. The segment covering glutamine 179–serine 201 has biased composition (low complexity). A compositionally biased stretch (polar residues) spans leucine 202 to arginine 228. Residues glutamate 229–serine 240 are compositionally biased toward basic and acidic residues. Residues asparagine 244 to proline 308 constitute a DNA-binding region (WRKY 1). 2 stretches are compositionally biased toward polar residues: residues arginine 311–asparagine 335 and threonine 343–alanine 355. The segment covering valine 368–valine 387 has biased composition (basic and acidic residues). The WRKY 2 DNA-binding region spans serine 409–proline 474.

In terms of tissue distribution, in young, mature and senescent leaves.

It is found in the nucleus. Functionally, transcription factor. Interacts specifically with the W box (5'-(T)TGAC[CT]-3'), a frequently occurring elicitor-responsive cis-acting element. This Arabidopsis thaliana (Mouse-ear cress) protein is Probable WRKY transcription factor 3 (WRKY3).